Consider the following 144-residue polypeptide: Toxin MT0934 (144 aa).

Its function is as follows. Toxic component of a type II toxin-antitoxin (TA) system. Its toxic effect is neutralized by coexpression with cognate antitoxin MT0933. This Mycobacterium tuberculosis (strain CDC 1551 / Oshkosh) protein is Toxin MT0934.